We begin with the raw amino-acid sequence, 252 residues long: Triosephosphate isomerase (252 aa).

9-11 is a substrate binding site; it reads NWK. The active-site Electrophile is histidine 96. The active-site Proton acceptor is glutamate 166. Substrate-binding positions include glycine 172, serine 212, and 233–234; that span reads GG.

It belongs to the triosephosphate isomerase family. Homodimer.

Its subcellular location is the cytoplasm. It catalyses the reaction D-glyceraldehyde 3-phosphate = dihydroxyacetone phosphate. It participates in carbohydrate biosynthesis; gluconeogenesis. It functions in the pathway carbohydrate degradation; glycolysis; D-glyceraldehyde 3-phosphate from glycerone phosphate: step 1/1. Functionally, involved in the gluconeogenesis. Catalyzes stereospecifically the conversion of dihydroxyacetone phosphate (DHAP) to D-glyceraldehyde-3-phosphate (G3P). The sequence is that of Triosephosphate isomerase from Prosthecochloris aestuarii (strain DSM 271 / SK 413).